The sequence spans 284 residues: uncharacterized protein (284 aa).

Residues 12–32 (ILFILFVVAFCVYLVPRVAIN) traverse the membrane as a helical segment.

It belongs to the serine esterase family.

It localises to the membrane. This is an uncharacterized protein from Escherichia coli O157:H7.